A 280-amino-acid chain; its full sequence is Thioesterase pynI (280 aa).

Positions L136 to N145 are enriched in acidic residues. The disordered stretch occupies residues L136 to D167.

Belongs to the AMT4 thioesterase family.

It participates in secondary metabolite biosynthesis. Its function is as follows. Thioesterase; part of the gene cluster that mediates the biosynthesis of pyranonigrins, a family of antioxidative compounds. The first step of pyranonigrins biosynthesis is performed by the hybrid PKS-NRPS synthetase that condenses 6 malonyl-CoA units to an acetyl starter unit, to form a 1,3,5-trioxotetradecane-6,8-dienyl-ACP. The enoyl reductase (ER) domain of pynA is likely to be functional during the first two rounds of polyketide chain extension, to generate the saturated C-C bonds of the alkyl side chain. PynA subsequently forms the amide bond between the acyl chain and L-serine. Although pynA has a terminal reductase domain, it appears to require the thioesterase pynI for the release of the straight-chain intermediate from pynA via the formation of a tetramic acid pyranonigrin J. The methyltransferase pynC then coverts pyranonigrin J to pyranonigrin I via N-methylation. The FAD-dependent monooxygenase pynG catalyzes an epoxidation-mediated cyclization to form the dihydro-gamma-pyrone moiety, followed by pynD-catalyzed oxidation of the alcohol to the ketone and enolization to yield the characteristic tetramic acid-fused gamma-pyrone core of pyranonigrin H. Pyranonigrin H is substrate of pynH for dehydration-mediated exo-methylene formation from the serine side chain to produce pyranonigrin E, before the oxidase pynE reduces the exo-methylene of pyranonigrin E into a pendant methyl to form pyranonigrin G. The FAD-linked oxidoreductase pynB performs the reverse reaction and converts pyranonigrin G back to pyranonigrin E. In Aspergillus niger (strain ATCC MYA-4892 / CBS 513.88 / FGSC A1513), this protein is Thioesterase pynI.